Consider the following 318-residue polypeptide: Transaldolase (318 aa).

The active-site Schiff-base intermediate with substrate is the Lys132.

Belongs to the transaldolase family. Type 1 subfamily. Homodimer.

Its subcellular location is the cytoplasm. The enzyme catalyses D-sedoheptulose 7-phosphate + D-glyceraldehyde 3-phosphate = D-erythrose 4-phosphate + beta-D-fructose 6-phosphate. Its pathway is carbohydrate degradation; pentose phosphate pathway; D-glyceraldehyde 3-phosphate and beta-D-fructose 6-phosphate from D-ribose 5-phosphate and D-xylulose 5-phosphate (non-oxidative stage): step 2/3. Its function is as follows. Transaldolase is important for the balance of metabolites in the pentose-phosphate pathway. This chain is Transaldolase, found in Shewanella sediminis (strain HAW-EB3).